Reading from the N-terminus, the 212-residue chain is Pyridoxine/pyridoxamine 5'-phosphate oxidase (212 aa).

Substrate-binding positions include arginine 8–tyrosine 11 and lysine 66. FMN-binding positions include arginine 61–lysine 66, phenylalanine 76–threonine 77, arginine 82, lysine 83, and glutamine 105. Residues tyrosine 123, arginine 127, and serine 131 each contribute to the substrate site. Residues glutamine 140–serine 141 and tryptophan 185 contribute to the FMN site. Substrate is bound at residue arginine 191 to histidine 193. Residue arginine 195 participates in FMN binding.

Belongs to the pyridoxamine 5'-phosphate oxidase family. As to quaternary structure, homodimer. FMN serves as cofactor.

The enzyme catalyses pyridoxamine 5'-phosphate + O2 + H2O = pyridoxal 5'-phosphate + H2O2 + NH4(+). It carries out the reaction pyridoxine 5'-phosphate + O2 = pyridoxal 5'-phosphate + H2O2. Its pathway is cofactor metabolism; pyridoxal 5'-phosphate salvage; pyridoxal 5'-phosphate from pyridoxamine 5'-phosphate: step 1/1. It functions in the pathway cofactor metabolism; pyridoxal 5'-phosphate salvage; pyridoxal 5'-phosphate from pyridoxine 5'-phosphate: step 1/1. Catalyzes the oxidation of either pyridoxine 5'-phosphate (PNP) or pyridoxamine 5'-phosphate (PMP) into pyridoxal 5'-phosphate (PLP). This Shewanella sp. (strain W3-18-1) protein is Pyridoxine/pyridoxamine 5'-phosphate oxidase.